The sequence spans 388 residues: MSENGLEQEVTVEEKNNDVTEKILVEGEKSKEYEETPRKVKIVKRKKQPARKQIETRPEYEMEPEQPGQVYNLWYNKWSGGMRQDPLKSQVKSETRCVISRDSGYTKADKNPGSFFCLYFARGMCSEGSKCEYLHRLPKDTDFFNANVDCFGREKHADYRDDMGGVGSFLRQNYTLYVGGITPTDDIEEIVSRHFAEWGDIERIRVLNSRGIAFITYLNEANAQFAKEAMAHQSLDHDECLNVRWATTDPNPASQARNQRRLEERAANAVKKLLPKQFLLDLEETKNGKSGNRKRKLELEFGLKGYVPSDDLLYADGANSVHNQLAANEFPNKSQSEEGSNDDHKSVTTTESQNKFVNSQILSDLQVAKQAVHTNQSALVSYYDSDED.

The segment at Val43–Glu63 is disordered. Residues Asn111–Pro138 form a C3H1-type zinc finger. The RRM domain maps to Tyr174–Thr248. Positions Pro331–Ser352 are disordered.

This sequence belongs to the RRM CWC2 family. In terms of assembly, belongs to the 40S cdc5-associated complex (or cwf complex), a spliceosome sub-complex reminiscent of a late-stage spliceosome composed of the U2, U5 and U6 snRNAs and at least brr2, cdc5, cwf2/prp3, cwf3/syf1, cwf4/syf3, cwf5/ecm2, spp42/cwf6, cwf7/spf27, cwf8, cwf9, cwf10, cwf11, cwf12, prp45/cwf13, cwf14, cwf15, cwf16, cwf17, cwf18, cwf19, cwf20, cwf21, cwf22, cwf23, cwf24, cwf25, cwf26, cyp7/cwf27, cwf28, cwf29/ist3, lea1, msl1, prp5/cwf1, prp10, prp12/sap130, prp17, prp22, sap61, sap62, sap114, sap145, slu7, smb1, smd1, smd3, smf1, smg1 and syf2.

The protein localises to the nucleus. Functionally, involved in the first step of pre-mRNA splicing. Required for cell growth and cell cycle control. Plays a role in the levels of the U1, U4, U5 and U6 snRNAs and the maintenance of the U4/U6 snRNA complex. May provide the link between the 'nineteen complex' NTC spliceosome protein complex and the spliceosome through the U6 snRNA. Associates predominantly with U6 snRNAs in assembled active spliceosomes. Binds directly to the internal stem-loop (ISL) domain of the U6 snRNA and to the pre-mRNA intron near the 5' splice site during the activation and catalytic phases of the spliceosome cycle. Involved in pre-mRNA splicing. The chain is Pre-mRNA-splicing factor cwf2 (cwf2) from Schizosaccharomyces pombe (strain 972 / ATCC 24843) (Fission yeast).